The sequence spans 214 residues: Cytochrome b (214 aa).

The next 4 helical transmembrane spans lie at 31 to 51, 75 to 96, 111 to 131, and 176 to 196; these read FGSMLLSCSMIQIMTGFFLAI, WIMQNTHAIGASLFFICIYIHI, WLSGTTLLIILMATAFFGYVL, and FFALHFILPFAIISMSSIHIL. Heme b contacts are provided by histidine 81 and histidine 95. Positions 180 and 194 each coordinate heme b. Histidine 199 is an a ubiquinone binding site.

This sequence belongs to the cytochrome b family. As to quaternary structure, the cytochrome bc1 complex contains 3 respiratory subunits (MT-CYB, CYC1 and UQCRFS1), 2 core proteins (UQCRC1 and UQCRC2) and probably 6 low-molecular weight proteins. Heme b serves as cofactor.

It localises to the mitochondrion inner membrane. Its function is as follows. Component of the ubiquinol-cytochrome c reductase complex (complex III or cytochrome b-c1 complex) that is part of the mitochondrial respiratory chain. The b-c1 complex mediates electron transfer from ubiquinol to cytochrome c. Contributes to the generation of a proton gradient across the mitochondrial membrane that is then used for ATP synthesis. In Trimeresurus stejnegeri (Chinese green tree viper), this protein is Cytochrome b (MT-CYB).